The chain runs to 55 residues: Large ribosomal subunit protein bL33 (55 aa).

This sequence belongs to the bacterial ribosomal protein bL33 family.

This is Large ribosomal subunit protein bL33 from Zymomonas mobilis subsp. mobilis (strain ATCC 31821 / ZM4 / CP4).